The primary structure comprises 352 residues: tRNA N6-adenosine threonylcarbamoyltransferase (352 aa).

Residues His-115 and His-119 each coordinate Fe cation. Substrate is bound by residues 138-142 (LVSGG), Asp-171, Gly-184, and Asn-277. Asp-305 contributes to the Fe cation binding site.

The protein belongs to the KAE1 / TsaD family. The cofactor is Fe(2+).

It localises to the cytoplasm. The enzyme catalyses L-threonylcarbamoyladenylate + adenosine(37) in tRNA = N(6)-L-threonylcarbamoyladenosine(37) in tRNA + AMP + H(+). Required for the formation of a threonylcarbamoyl group on adenosine at position 37 (t(6)A37) in tRNAs that read codons beginning with adenine. Is involved in the transfer of the threonylcarbamoyl moiety of threonylcarbamoyl-AMP (TC-AMP) to the N6 group of A37, together with TsaE and TsaB. TsaD likely plays a direct catalytic role in this reaction. The polypeptide is tRNA N6-adenosine threonylcarbamoyltransferase (Variovorax paradoxus (strain S110)).